A 316-amino-acid chain; its full sequence is Pantothenate kinase (316 aa).

ATP is bound at residue 95–102; the sequence is GSVSVGKS.

The protein belongs to the prokaryotic pantothenate kinase family.

Its subcellular location is the cytoplasm. The enzyme catalyses (R)-pantothenate + ATP = (R)-4'-phosphopantothenate + ADP + H(+). Its pathway is cofactor biosynthesis; coenzyme A biosynthesis; CoA from (R)-pantothenate: step 1/5. The chain is Pantothenate kinase from Haemophilus ducreyi (strain 35000HP / ATCC 700724).